Consider the following 573-residue polypeptide: MGVSAVLKRARNLLATFIVCCFMAVVLVLALAHHFINEHRDTRSSSTQIEVDDESKRNVHHDHVLTRTNAYATPYLDLEHDKKNGIVYDHTRTVVRKKNHEVGSSSLHKNLFHKFLTKLIFRFIEKEKVTEGVTQGKFNNSSNEIANHEPVFEKIPVQCDNPLQNLILSEDLTLVADLNYYFNQYNIQIEEFRLETEDGFVIDLWHLIPKYRTTDSDKKKRPPILMLHGLLQSSGSFASNGRKSLAYFLYQSGYDIWLGNNRCGFRPEWNEAKVPTLASRWDWDLREMVKYDLTLLIDTVLAKTQFEKLTLISHSQGTTQGFMGLVNEDKFFPPGSGSKESFFTSKIANYIALAPAVYPGPLLNEKLFVKLMTKEIENPWFFGETSFFEIMMIVRNLCVGESLFSFVCYTIFNYLFDWNDTLWDTALRDRHFLFSPVHVSVKLMQWWLSPDPNKVSFKFGSHKMFPDNVKWFSDASKAPNIYLFVPKQDRLVDGERLINHFVNVESNVNYKIWYIDEYAHIDVLWAHDVIERIGKPILQNLNNYYSKKPSSAFESDCSDTEVETELEMVAEKA.

The Cytoplasmic portion of the chain corresponds to 1–12; sequence MGVSAVLKRARN. Residues 13-33 lie within the membrane without spanning it; the sequence is LLATFIVCCFMAVVLVLALAH. At 34 to 573 the chain is on the cytoplasmic side; the sequence is HFINEHRDTR…TELEMVAEKA (540 aa). Ser315 functions as the Nucleophile in the catalytic mechanism. Active-site charge relay system residues include Asp489 and His520.

Belongs to the AB hydrolase superfamily. Not N-glycosylated.

The protein localises to the lipid droplet. It localises to the membrane. The enzyme catalyses a sterol ester + H2O = a sterol + a fatty acid + H(+). Its function is as follows. Mediates the hydrolysis of steryl esters, thereby playing a central role in lipid metabolism. Under heme-deficient conditions, it constitutes the major steryl ester hydrolase, suggesting that it plays a central role in mobilization of steryl esters under anaerobic conditions. In Saccharomyces cerevisiae (strain ATCC 204508 / S288c) (Baker's yeast), this protein is Sterol esterase 1 (YEH1).